The sequence spans 199 residues: GTP cyclohydrolase-2 (199 aa).

Residue 50–54 coordinates GTP; that stretch reads RIHSE. Residues Cys-55, Cys-66, and Cys-68 each contribute to the Zn(2+) site. GTP contacts are provided by residues Gln-71, 93 to 95, and Thr-115; that span reads EGR. The Proton acceptor role is filled by Asp-127. Residue Arg-129 is the Nucleophile of the active site. GTP is bound by residues Thr-150 and Lys-155.

This sequence belongs to the GTP cyclohydrolase II family. In terms of assembly, homodimer. Requires Zn(2+) as cofactor.

It carries out the reaction GTP + 4 H2O = 2,5-diamino-6-hydroxy-4-(5-phosphoribosylamino)-pyrimidine + formate + 2 phosphate + 3 H(+). Its pathway is cofactor biosynthesis; riboflavin biosynthesis; 5-amino-6-(D-ribitylamino)uracil from GTP: step 1/4. In terms of biological role, catalyzes the conversion of GTP to 2,5-diamino-6-ribosylamino-4(3H)-pyrimidinone 5'-phosphate (DARP), formate and pyrophosphate. In Buchnera aphidicola subsp. Baizongia pistaciae (strain Bp), this protein is GTP cyclohydrolase-2.